We begin with the raw amino-acid sequence, 221 residues long: Phosphoribosylformylglycinamidine synthase subunit PurQ (221 aa).

The Glutamine amidotransferase type-1 domain occupies 2–221; that stretch reads KTAVIQFPGS…VFESLKTVKK (220 aa). C87 acts as the Nucleophile in catalysis. Catalysis depends on residues H195 and E197.

In terms of assembly, part of the FGAM synthase complex composed of 1 PurL, 1 PurQ and 2 PurS subunits.

It localises to the cytoplasm. It carries out the reaction N(2)-formyl-N(1)-(5-phospho-beta-D-ribosyl)glycinamide + L-glutamine + ATP + H2O = 2-formamido-N(1)-(5-O-phospho-beta-D-ribosyl)acetamidine + L-glutamate + ADP + phosphate + H(+). It catalyses the reaction L-glutamine + H2O = L-glutamate + NH4(+). The protein operates within purine metabolism; IMP biosynthesis via de novo pathway; 5-amino-1-(5-phospho-D-ribosyl)imidazole from N(2)-formyl-N(1)-(5-phospho-D-ribosyl)glycinamide: step 1/2. In terms of biological role, part of the phosphoribosylformylglycinamidine synthase complex involved in the purines biosynthetic pathway. Catalyzes the ATP-dependent conversion of formylglycinamide ribonucleotide (FGAR) and glutamine to yield formylglycinamidine ribonucleotide (FGAM) and glutamate. The FGAM synthase complex is composed of three subunits. PurQ produces an ammonia molecule by converting glutamine to glutamate. PurL transfers the ammonia molecule to FGAR to form FGAM in an ATP-dependent manner. PurS interacts with PurQ and PurL and is thought to assist in the transfer of the ammonia molecule from PurQ to PurL. The sequence is that of Phosphoribosylformylglycinamidine synthase subunit PurQ from Deinococcus radiodurans (strain ATCC 13939 / DSM 20539 / JCM 16871 / CCUG 27074 / LMG 4051 / NBRC 15346 / NCIMB 9279 / VKM B-1422 / R1).